A 250-amino-acid polypeptide reads, in one-letter code: Methylthioribulose-1-phosphate dehydratase (250 aa).

H103 and H105 together coordinate Zn(2+).

The protein belongs to the aldolase class II family. MtnB subfamily. Zn(2+) is required as a cofactor.

The enzyme catalyses 5-(methylsulfanyl)-D-ribulose 1-phosphate = 5-methylsulfanyl-2,3-dioxopentyl phosphate + H2O. It participates in amino-acid biosynthesis; L-methionine biosynthesis via salvage pathway; L-methionine from S-methyl-5-thio-alpha-D-ribose 1-phosphate: step 2/6. Catalyzes the dehydration of methylthioribulose-1-phosphate (MTRu-1-P) into 2,3-diketo-5-methylthiopentyl-1-phosphate (DK-MTP-1-P). This is Methylthioribulose-1-phosphate dehydratase from Leptospira borgpetersenii serovar Hardjo-bovis (strain JB197).